The primary structure comprises 477 residues: Secreted RxLR effector protein 102 (477 aa).

The N-terminal stretch at 1-20 (MRGGYYVLTALFVVASSEIA) is a signal peptide. The RxLR-dEER signature appears at 48-65 (RFLRESRGVHGNVANEER). Disordered regions lie at residues 326 to 345 (SKGQ…TSKG), 351 to 370 (IKRS…LPSI), 376 to 401 (SSKS…KRSR), and 433 to 455 (PRSA…APSS).

This sequence belongs to the RxLR effector family.

The protein localises to the secreted. The protein resides in the host nucleus. Its function is as follows. Secreted effector that acts as an elicitor that induces cell death in host plant cells. The polypeptide is Secreted RxLR effector protein 102 (Plasmopara viticola (Downy mildew of grapevine)).